The chain runs to 71 residues: Large ribosomal subunit protein bL31 (71 aa).

Zn(2+) is bound by residues C16, C18, C36, and C39.

Belongs to the bacterial ribosomal protein bL31 family. Type A subfamily. In terms of assembly, part of the 50S ribosomal subunit. Zn(2+) serves as cofactor.

Binds the 23S rRNA. The chain is Large ribosomal subunit protein bL31 from Petrotoga mobilis (strain DSM 10674 / SJ95).